Consider the following 237-residue polypeptide: Ribosomal RNA small subunit methyltransferase G (237 aa).

Residues Gly-78, Phe-83, 129–130, and Arg-148 contribute to the S-adenosyl-L-methionine site; that span reads AE.

Belongs to the methyltransferase superfamily. RNA methyltransferase RsmG family.

It localises to the cytoplasm. Its function is as follows. Specifically methylates the N7 position of a guanine in 16S rRNA. The polypeptide is Ribosomal RNA small subunit methyltransferase G (Streptococcus equi subsp. equi (strain 4047)).